The sequence spans 115 residues: uncharacterized protein (115 aa).

At 1–11 the chain is on the cytoplasmic side; that stretch reads MKLTKEKKNDC. A helical membrane pass occupies residues 12–32; sequence LVGVSYIPPLNFFTLTFLFLL. Over 33–52 the chain is Extracellular; sequence RIEKVHLSLSLSLSLSLRFY. Residues 53–73 traverse the membrane as a helical segment; it reads YFHNVCYPSLFLFFCFVIPFF. Over 74-78 the chain is Cytoplasmic; the sequence is YSVRF. A helical membrane pass occupies residues 79–98; sequence ILLYLHILRSFYELNILLLY. The Extracellular portion of the chain corresponds to 99–115; that stretch reads GAENSRRQSPPGYYVIR.

The protein localises to the membrane. This is an uncharacterized protein from Saccharomyces cerevisiae (strain ATCC 204508 / S288c) (Baker's yeast).